The chain runs to 339 residues: Acyl-CoA dehydrogenase FadE28 (339 aa).

FAD contacts are provided by arginine 227, glutamine 238, histidine 295, and glycine 299.

The protein belongs to the acyl-CoA dehydrogenase family. As to quaternary structure, heterotetramer composed of FadE28 and FadE29. It depends on FAD as a cofactor.

It catalyses the reaction 3-oxochol-4-en-22-oyl-CoA + A = 3-oxochola-4,17-dien-22-oyl-CoA + AH2. It functions in the pathway steroid metabolism; cholesterol degradation. Involved in the third cycle of side chain dehydrogenation in the beta-oxidation of cholesterol catabolism. May play an important role for the initial macrophage invasion, possibly in response to the acidification of phagosome. It contributes partly to the virulence by increasing the efficiency of beta-oxidation. Catalyzes the dehydrogenation of 2'-propanoyl-CoA ester side chains of 3-oxo-4-pregnene-20-carboxyl-CoA (3-OPC-CoA) to yield 3-oxo-4,17-pregnadiene-20-carboxyl-CoA (3-OPDC-CoA). Also able to dehydrogenate steroyl-CoA such as 3-oxo-chol-4-en-24-oyl-CoA (3-OCO-CoA), 1beta-(2'-propanoyl-CoA)-3a-alpha-H-7a-beta-methylhexahydro-4-indanone (indanone-CoA ester), hexahydroindanone and pregenenone. This Mycobacterium tuberculosis (strain ATCC 25618 / H37Rv) protein is Acyl-CoA dehydrogenase FadE28 (fadE28).